The primary structure comprises 780 residues: ATP-dependent 6-phosphofructokinase, muscle type (780 aa).

At Thr-2 the chain carries N-acetylthreonine. Residues 2–390 (THEEHHAAKT…NWEVYKLLAH (389 aa)) form an N-terminal catalytic PFK domain 1 region. Residues Gly-25, 88 to 89 (RC), and 118 to 121 (GDGS) contribute to the ATP site. Asp-119 is a Mg(2+) binding site. Position 133 is a phosphoserine (Ser-133). Substrate contacts are provided by residues 164–166 (SID), Arg-201, 208–210 (MGR), Glu-264, Arg-292, and 298–301 (HVQR). The Proton acceptor role is filled by Asp-166. The residue at position 377 (Ser-377) is a Phosphoserine. The interdomain linker stretch occupies residues 391–401 (VRPPVSKSGSH). The C-terminal regulatory PFK domain 2 stretch occupies residues 402–780 (TVAVMNVGAP…TRKRSGEGAV (379 aa)). Residues Arg-471 and 528–532 (TVSNN) each bind beta-D-fructose 2,6-bisphosphate. The O-linked (GlcNAc) serine glycan is linked to Ser-530. An N6-(2-hydroxyisobutyryl)lysine modification is found at Lys-557. Residues Arg-566, 573-575 (MGG), Glu-629, Arg-655, and 661-664 (HMQQ) contribute to the beta-D-fructose 2,6-bisphosphate site. Position 667 is a phosphoserine (Ser-667). Arg-735 lines the beta-D-fructose 2,6-bisphosphate pocket. Ser-775 carries the post-translational modification Phosphoserine.

This sequence belongs to the phosphofructokinase type A (PFKA) family. ATP-dependent PFK group I subfamily. Eukaryotic two domain clade 'E' sub-subfamily. Homo- and heterotetramers. Phosphofructokinase (PFK) enzyme functions as a tetramer composed of different combinations of 3 types of subunits, called PFKM (M), PFKL (L) and PFKP (P). The composition of the PFK tetramer differs according to the tissue type it is present in. The kinetic and regulatory properties of the tetrameric enzyme are dependent on the subunit composition, hence can vary across tissues. Interacts (via C-terminus) with HK1 (via N-terminal spermatogenic cell-specific region). The cofactor is Mg(2+). In terms of processing, glcNAcylation decreases enzyme activity.

The protein resides in the cytoplasm. The catalysed reaction is beta-D-fructose 6-phosphate + ATP = beta-D-fructose 1,6-bisphosphate + ADP + H(+). It participates in carbohydrate degradation; glycolysis; D-glyceraldehyde 3-phosphate and glycerone phosphate from D-glucose: step 3/4. With respect to regulation, allosterically activated by ADP, AMP, or fructose 2,6-bisphosphate, and allosterically inhibited by ATP or citrate. In terms of biological role, catalyzes the phosphorylation of D-fructose 6-phosphate to fructose 1,6-bisphosphate by ATP, the first committing step of glycolysis. This is ATP-dependent 6-phosphofructokinase, muscle type (PFKM) from Macaca fascicularis (Crab-eating macaque).